The following is a 91-amino-acid chain: MDLLYLSSFRSRHYHQHSLAAYDTAEYWTCPIEMLHLQTEKRGTADIFRQYECRYIKTNFPFCYCTFNKYRTCGIFCITNFSAVRIINPFV.

The sequence is that of Protein xpaR7 (xpaR7) from Bacillus licheniformis.